Here is a 415-residue protein sequence, read N- to C-terminus: CCA-adding enzyme (415 aa).

Residues Ser52 and Arg55 each contribute to the ATP site. The CTP site is built by Ser52 and Arg55. Mg(2+) is bound by residues Asp64, Asp66, and Asp116. His139, Lys159, and Tyr168 together coordinate ATP. CTP-binding residues include His139, Lys159, and Tyr168.

It belongs to the tRNA nucleotidyltransferase/poly(A) polymerase family. Archaeal CCA-adding enzyme subfamily. Homodimer. It depends on Mg(2+) as a cofactor.

It catalyses the reaction a tRNA precursor + 2 CTP + ATP = a tRNA with a 3' CCA end + 3 diphosphate. The catalysed reaction is a tRNA with a 3' CCA end + 2 CTP + ATP = a tRNA with a 3' CCACCA end + 3 diphosphate. In terms of biological role, catalyzes the addition and repair of the essential 3'-terminal CCA sequence in tRNAs without using a nucleic acid template. Adds these three nucleotides in the order of C, C, and A to the tRNA nucleotide-73, using CTP and ATP as substrates and producing inorganic pyrophosphate. tRNA 3'-terminal CCA addition is required both for tRNA processing and repair. Also involved in tRNA surveillance by mediating tandem CCA addition to generate a CCACCA at the 3' terminus of unstable tRNAs. While stable tRNAs receive only 3'-terminal CCA, unstable tRNAs are marked with CCACCA and rapidly degraded. This chain is CCA-adding enzyme, found in Pyrobaculum neutrophilum (strain DSM 2338 / JCM 9278 / NBRC 100436 / V24Sta) (Thermoproteus neutrophilus).